The sequence spans 565 residues: Dihydroxy-acid dehydratase (565 aa).

Cysteine 50 lines the [2Fe-2S] cluster pocket. A Mg(2+)-binding site is contributed by aspartate 82. [2Fe-2S] cluster is bound at residue cysteine 123. Residues aspartate 124 and lysine 125 each contribute to the Mg(2+) site. The residue at position 125 (lysine 125) is an N6-carboxylysine. [2Fe-2S] cluster is bound at residue cysteine 195. Glutamate 447 is a Mg(2+) binding site. Residue serine 473 is the Proton acceptor of the active site.

This sequence belongs to the IlvD/Edd family. Homodimer. [2Fe-2S] cluster serves as cofactor. The cofactor is Mg(2+).

The enzyme catalyses (2R)-2,3-dihydroxy-3-methylbutanoate = 3-methyl-2-oxobutanoate + H2O. The catalysed reaction is (2R,3R)-2,3-dihydroxy-3-methylpentanoate = (S)-3-methyl-2-oxopentanoate + H2O. Its pathway is amino-acid biosynthesis; L-isoleucine biosynthesis; L-isoleucine from 2-oxobutanoate: step 3/4. It participates in amino-acid biosynthesis; L-valine biosynthesis; L-valine from pyruvate: step 3/4. Functions in the biosynthesis of branched-chain amino acids. Catalyzes the dehydration of (2R,3R)-2,3-dihydroxy-3-methylpentanoate (2,3-dihydroxy-3-methylvalerate) into 2-oxo-3-methylpentanoate (2-oxo-3-methylvalerate) and of (2R)-2,3-dihydroxy-3-methylbutanoate (2,3-dihydroxyisovalerate) into 2-oxo-3-methylbutanoate (2-oxoisovalerate), the penultimate precursor to L-isoleucine and L-valine, respectively. This Halorhodospira halophila (strain DSM 244 / SL1) (Ectothiorhodospira halophila (strain DSM 244 / SL1)) protein is Dihydroxy-acid dehydratase.